The sequence spans 554 residues: Malate synthase 2 (554 aa).

Arg177 functions as the Proton acceptor in the catalytic mechanism. The Proton donor role is filled by Asp457. The SKL peroxisome targeting motif signature appears at 552-554 (SKL).

This sequence belongs to the malate synthase family. In terms of assembly, interacts with PEX9.

Its subcellular location is the peroxisome matrix. It catalyses the reaction glyoxylate + acetyl-CoA + H2O = (S)-malate + CoA + H(+). Allantoin metabolism-specific malate synthase involved in the recycling the glyoxylate generated during allantoin degradation by the ureidoglycollate (UG) hydrolase reaction. The protein is Malate synthase 2 of Saccharomyces cerevisiae (strain ATCC 204508 / S288c) (Baker's yeast).